The primary structure comprises 494 residues: Tripartite motif-containing protein 5 (494 aa).

An N-acetylalanine modification is found at Ala2. An RING-type zinc finger spans residues Cys15 to Arg59. At Ser86 the chain carries Phosphoserine. Residues Gln91–Val132 form a B box-type zinc finger. Cys96, His99, Cys118, and His124 together coordinate Zn(2+). A coiled-coil region spans residues Val132–Val223. A required for interaction with GABARAP and for autophagy region spans residues Phe186–Lys199. Positions Pro280–Ser494 constitute a B30.2/SPRY domain.

It belongs to the TRIM/RBCC family. In terms of assembly, can form homodimers and homotrimers. In addition to lower-order dimerization, also exhibits a higher-order multimerization and both low- and high-order multimerizations are essential for its restriction activity. Interacts with BTBD1 and BTBD2. Interacts with PSMC4, PSMC5, PSMD7 and HSPA8/HSC70. Interacts (via B30.2/SPRY domain) with HSPA1A/B. Interacts with PSMC2, MAP3K7/TAK1, TAB2 and TAB3. Interacts with SQSTM1. Interacts with TRIM6 and TRIM34. Interacts with ULK1 (phosphorylated form), GABARAP, GABARAPL1, GABARAPL2, MAP1LC3A, MAP1LC3C and BECN1. Degraded in a proteasome-independent fashion in the absence of viral infection but in a proteasome-dependent fashion following exposure to restriction sensitive virus. In terms of processing, autoubiquitinated in a RING finger- and UBE2D2-dependent manner. Monoubiquitinated by TRIM21. Deubiquitinated by Yersinia YopJ. Ubiquitination may not lead to proteasomal degradation.

The protein resides in the cytoplasm. The protein localises to the nucleus. The catalysed reaction is S-ubiquitinyl-[E2 ubiquitin-conjugating enzyme]-L-cysteine + [acceptor protein]-L-lysine = [E2 ubiquitin-conjugating enzyme]-L-cysteine + N(6)-ubiquitinyl-[acceptor protein]-L-lysine.. It participates in protein modification; protein ubiquitination. Its function is as follows. Capsid-specific restriction factor that prevents infection from non-host-adapted retroviruses. Blocks viral replication early in the life cycle, after viral entry but before reverse transcription. In addition to acting as a capsid-specific restriction factor, also acts as a pattern recognition receptor that activates innate immune signaling in response to the retroviral capsid lattice. Binding to the viral capsid triggers its E3 ubiquitin ligase activity, and in concert with the heterodimeric ubiquitin conjugating enzyme complex UBE2V1-UBE2N (also known as UBC13-UEV1A complex) generates 'Lys-63'-linked polyubiquitin chains, which in turn are catalysts in the autophosphorylation of the MAP3K7/TAK1 complex (includes TAK1, TAB2, and TAB3). Activation of the MAP3K7/TAK1 complex by autophosphorylation results in the induction and expression of NF-kappa-B and MAPK-responsive inflammatory genes, thereby leading to an innate immune response in the infected cell. Plays a role in regulating autophagy through activation of autophagy regulator BECN1 by causing its dissociation from its inhibitors BCL2 and TAB2. This chain is Tripartite motif-containing protein 5 (TRIM5), found in Cebuella pygmaea (Pygmy marmoset).